The sequence spans 435 residues: Histidinol dehydrogenase (435 aa).

NAD(+) contacts are provided by tyrosine 131, glutamine 189, and asparagine 212. Residues serine 238, glutamine 260, and histidine 263 each coordinate substrate. Residues glutamine 260 and histidine 263 each contribute to the Zn(2+) site. Residues glutamate 327 and histidine 328 each act as proton acceptor in the active site. 4 residues coordinate substrate: histidine 328, aspartate 361, glutamate 415, and histidine 420. Residue aspartate 361 participates in Zn(2+) binding. Residue histidine 420 participates in Zn(2+) binding.

This sequence belongs to the histidinol dehydrogenase family. Homodimer. Zn(2+) is required as a cofactor.

The enzyme catalyses L-histidinol + 2 NAD(+) + H2O = L-histidine + 2 NADH + 3 H(+). Its pathway is amino-acid biosynthesis; L-histidine biosynthesis; L-histidine from 5-phospho-alpha-D-ribose 1-diphosphate: step 9/9. Functionally, catalyzes the sequential NAD-dependent oxidations of L-histidinol to L-histidinaldehyde and then to L-histidine. In Buchnera aphidicola subsp. Baizongia pistaciae (strain Bp), this protein is Histidinol dehydrogenase.